Here is a 102-residue protein sequence, read N- to C-terminus: Small ribosomal subunit protein uS10 (102 aa).

This sequence belongs to the universal ribosomal protein uS10 family. Part of the 30S ribosomal subunit.

Involved in the binding of tRNA to the ribosomes. This Nitrosospira multiformis (strain ATCC 25196 / NCIMB 11849 / C 71) protein is Small ribosomal subunit protein uS10.